A 268-amino-acid polypeptide reads, in one-letter code: Zwei Ig domain protein zig-8 (268 aa).

Residues 1–21 (MRRFSNICVILFSFLYATGHG) form the signal peptide. Ig-like C2-type domains are found at residues 40 to 128 (PSQT…NTVY) and 140 to 251 (PSPS…NSAT). A disulfide bridge links C57 with C118. N-linked (GlcNAc...) asparagine glycans are attached at residues N82, N155, N164, and N191. C165 and C226 are joined by a disulfide.

As to expression, expressed in PVT neurons and pharyngeal muscles.

It localises to the secreted. Functionally, together with zig-5, required postembryonically to maintain the position of ASI and ASH head neuron cell bodies and ventral nerve cord axons of PVQ, PVP and HSN neurons by preventing their displacement that could occur during body growth and movement. May act by reducing L1CAM-like protein sax-7 (long isoform) adhesion. The sequence is that of Zwei Ig domain protein zig-8 from Caenorhabditis elegans.